The sequence spans 105 residues: Met repressor (105 aa).

The protein belongs to the MetJ family. As to quaternary structure, homodimer.

It is found in the cytoplasm. Its function is as follows. This regulatory protein, when combined with SAM (S-adenosylmethionine) represses the expression of the methionine regulon and of enzymes involved in SAM synthesis. The chain is Met repressor from Vibrio cholerae serotype O1 (strain ATCC 39541 / Classical Ogawa 395 / O395).